The chain runs to 133 residues: Holo-[acyl-carrier-protein] synthase (133 aa).

Mg(2+) contacts are provided by D8 and E56.

It belongs to the P-Pant transferase superfamily. AcpS family. It depends on Mg(2+) as a cofactor.

Its subcellular location is the cytoplasm. It catalyses the reaction apo-[ACP] + CoA = holo-[ACP] + adenosine 3',5'-bisphosphate + H(+). Transfers the 4'-phosphopantetheine moiety from coenzyme A to a Ser of acyl-carrier-protein. In Clostridium perfringens (strain ATCC 13124 / DSM 756 / JCM 1290 / NCIMB 6125 / NCTC 8237 / Type A), this protein is Holo-[acyl-carrier-protein] synthase.